Here is a 401-residue protein sequence, read N- to C-terminus: Renin-2 (401 aa).

The first 25 residues, 1–25 (MDRRRMPLWALLLLWSPCTFSLPTG), serve as a signal peptide directing secretion. The propeptide at 26-63 (TTFERIPLKKMPSVREILEERGVDMTRLSAEWDVFTKR) is activation peptide. The region spanning 83-398 (YYGEIGIGTP…DRHNNRIGFA (316 aa)) is the Peptidase A1 domain. The active site involves Asp-101. 2 disulfide bridges follow: Cys-114–Cys-121 and Cys-277–Cys-281. Residue Asp-286 is part of the active site. Cys-320 and Cys-357 form a disulfide bridge.

The protein belongs to the peptidase A1 family. Dimer of a heavy chain and a light chain joined by a disulfide bond. As to expression, submandibular gland.

It is found in the secreted. The enzyme catalyses Cleavage of Leu-|-Xaa bond in angiotensinogen to generate angiotensin I.. Renin is a highly specific endopeptidase, related to pepsin, whose only known function is to generate angiotensin I from angiotensinogen in the plasma, initiating a cascade of reactions that produce an elevation of blood pressure and increased sodium retention by the kidney. In Mus musculus (Mouse), this protein is Renin-2.